The chain runs to 476 residues: Serine--tRNA ligase (476 aa).

T279–E281 lines the L-serine pocket. R310–E312 contributes to the ATP binding site. L-serine is bound at residue E333. E400–S403 contacts ATP. S435 contacts L-serine.

Belongs to the class-II aminoacyl-tRNA synthetase family. Type-1 seryl-tRNA synthetase subfamily. Homodimer. The tRNA molecule binds across the dimer.

The protein resides in the cytoplasm. The enzyme catalyses tRNA(Ser) + L-serine + ATP = L-seryl-tRNA(Ser) + AMP + diphosphate + H(+). It carries out the reaction tRNA(Sec) + L-serine + ATP = L-seryl-tRNA(Sec) + AMP + diphosphate + H(+). It functions in the pathway aminoacyl-tRNA biosynthesis; selenocysteinyl-tRNA(Sec) biosynthesis; L-seryl-tRNA(Sec) from L-serine and tRNA(Sec): step 1/1. Functionally, catalyzes the attachment of serine to tRNA(Ser). Is also able to aminoacylate tRNA(Sec) with serine, to form the misacylated tRNA L-seryl-tRNA(Sec), which will be further converted into selenocysteinyl-tRNA(Sec). The polypeptide is Serine--tRNA ligase (Rhodopseudomonas palustris (strain BisA53)).